We begin with the raw amino-acid sequence, 199 residues long: Recombination protein RecR (199 aa).

The segment at 57–72 (CSICGNFTDRDPCRLC) adopts a C4-type zinc-finger fold. The region spanning 80-175 (SCICVVEEAR…KVTRLAYGLP (96 aa)) is the Toprim domain.

Belongs to the RecR family.

Its function is as follows. May play a role in DNA repair. It seems to be involved in an RecBC-independent recombinational process of DNA repair. It may act with RecF and RecO. The polypeptide is Recombination protein RecR (Moorella thermoacetica (strain ATCC 39073 / JCM 9320)).